A 301-amino-acid chain; its full sequence is Multifunctional dioxygenase prhA (301 aa).

Positions 130, 132, and 214 each coordinate Fe cation.

The protein belongs to the PhyH family. In terms of assembly, homodimer. Fe cation is required as a cofactor.

It carries out the reaction preaustinoid A1 + 2-oxoglutarate + O2 = berkeleyone B + succinate + CO2 + H2O. The catalysed reaction is berkeleyone B + 2-oxoglutarate + O2 = berkeleydione + succinate + CO2 + H2O. The enzyme catalyses preaustinoid A + 2 2-oxoglutarate + 2 O2 = berkeleytrione + 2 succinate + 2 CO2 + H2O. The protein operates within secondary metabolite biosynthesis; terpenoid biosynthesis. Multifunctional dioxygenase; part of the gene cluster that mediates the biosynthesis of paraherquonin, a meroterpenoid with a unique, highly congested hexacyclic molecular architecture. The first step of the pathway is the synthesis of 3,5-dimethylorsellinic acid (DMOA) by the polyketide synthase prhL. Synthesis of DMOA is followed by farnesylation by the prenyltransferase prhE, methylesterification by the methyl-transferase prhM, epoxidation of the prenyl chain by the flavin-dependent monooxygenase prhF, and cyclization of the farnesyl moiety by the terpene cyclase prhH, to yield the tetracyclic intermediate, protoaustinoid A. The short chain dehydrogenase prhI then oxidizes the C-3 alcohol group of the terpene cyclase product to transform protoaustinoid A into protoaustinoid B. The FAD-binding monooxygenase prhJ catalyzes the oxidation of protoaustinoid B into preaustinoid A which is further oxidized into preaustinoid A1 by FAD-binding monooxygenase phrK. Finally, prhA leads to berkeleydione via the berkeleyone B intermediate. PrhA is a multifunctional dioxygenase that first desaturates at C5-C6 to form berkeleyone B, followed by rearrangement of the A/B-ring to form the cycloheptadiene moiety in berkeleydione. Berkeleydione serves as the key intermediate for the biosynthesis of paraherquonin as well as many other meroterpenoids. The cytochrome P450 monooxygenases prhB, prhD, and prhN, as well as the isomerase prhC, are probably involved in the late stage of paraherquonin biosynthesis, after the production of berkeleydione. Especially prhC might be a multifunctional enzyme that catalyzes the D-ring expansion via intramolecular methoxy rearrangement, as well as the hydrolysis of the expanded D-ring. This Penicillium brasilianum protein is Multifunctional dioxygenase prhA.